The primary structure comprises 60 residues: Large ribosomal subunit protein uL30 (60 aa).

It belongs to the universal ribosomal protein uL30 family. Part of the 50S ribosomal subunit.

The sequence is that of Large ribosomal subunit protein uL30 from Limosilactobacillus reuteri (strain DSM 20016) (Lactobacillus reuteri).